Consider the following 104-residue polypeptide: Circadian clock oscillator protein KaiB (104 aa).

It belongs to the KaiB family. In terms of assembly, the KaiABC complex composition changes during the circadian cycle to control KaiC phosphorylation. Complexes KaiC(6), KaiA(2-4):KaiC(6), KaiB(6):KaiC(6) and KaiC(6):KaiB(6):KaiA(12) are among the most important forms, many form cooperatively. Undergoes a major conformational rearrangment; in the free state forms homotetramers as a dimer of dimers. When bound to the CI domain of KaiC switches to a monomeric thioredoxin-fold (KaiB(fs)). KaiB(fs) binds CikA, leading it to dephosphorylate phospho-RpaA.

Key component of the KaiABC oscillator complex, which constitutes the main circadian regulator in cyanobacteria. Complex composition changes during the circadian cycle to control KaiC phosphorylation. KaiA stimulates KaiC autophosphorylation, while KaiB sequesters KaiA, leading to KaiC autodephosphorylation. Phospho-Ser-431 KaiC accumulation triggers binding of KaiB to form the KaiB(6):KaiC(6) complex, leading to changes in output regulators CikA and SasA. KaiB switches to a thioredoxin-like fold (KaiB(fs)) when bound to KaiC. KaiB(6):KaiC(6) formation exposes a site for KaiA binding that sequesters KaiA from KaiC, making the KaiC(6):KaiB(6):KaiA(12) complex that results in KaiC autodephosphorylation. Its function is as follows. A metamorphic protein which reversibly switches between an inactive tetrameric fold and a rare, thioredoxin-like monomeric fold (KaiB(fs)). KaiB(fs) binds phospho-KaiC, KaiA and CikA. KaiA and CikA compete for binding to KaiB(fs), and KaiB(fs) and SasA compete for binding to KaiC, thus the clock oscillator and output signal pathway are tightly coupled. In Nostoc punctiforme (strain ATCC 29133 / PCC 73102), this protein is Circadian clock oscillator protein KaiB.